A 358-amino-acid chain; its full sequence is UDP-N-acetylglucosamine--N-acetylmuramyl-(pentapeptide) pyrophosphoryl-undecaprenol N-acetylglucosamine transferase (358 aa).

UDP-N-acetyl-alpha-D-glucosamine contacts are provided by residues 11-13 (TGG), N124, R164, S195, and Q291.

This sequence belongs to the glycosyltransferase 28 family. MurG subfamily.

The protein localises to the cell inner membrane. It carries out the reaction di-trans,octa-cis-undecaprenyl diphospho-N-acetyl-alpha-D-muramoyl-L-alanyl-D-glutamyl-meso-2,6-diaminopimeloyl-D-alanyl-D-alanine + UDP-N-acetyl-alpha-D-glucosamine = di-trans,octa-cis-undecaprenyl diphospho-[N-acetyl-alpha-D-glucosaminyl-(1-&gt;4)]-N-acetyl-alpha-D-muramoyl-L-alanyl-D-glutamyl-meso-2,6-diaminopimeloyl-D-alanyl-D-alanine + UDP + H(+). It participates in cell wall biogenesis; peptidoglycan biosynthesis. Its function is as follows. Cell wall formation. Catalyzes the transfer of a GlcNAc subunit on undecaprenyl-pyrophosphoryl-MurNAc-pentapeptide (lipid intermediate I) to form undecaprenyl-pyrophosphoryl-MurNAc-(pentapeptide)GlcNAc (lipid intermediate II). The polypeptide is UDP-N-acetylglucosamine--N-acetylmuramyl-(pentapeptide) pyrophosphoryl-undecaprenol N-acetylglucosamine transferase (Leptospira interrogans serogroup Icterohaemorrhagiae serovar copenhageni (strain Fiocruz L1-130)).